Reading from the N-terminus, the 336-residue chain is Sex determination protein tasselseed-2 (336 aa).

Ile-59–Val-83 lines the NAD(+) pocket. Residue Ser-194 participates in substrate binding. Tyr-207 functions as the Proton acceptor in the catalytic mechanism.

The protein belongs to the short-chain dehydrogenases/reductases (SDR) family.

Functionally, required for stage-specific floral organ abortion. The sequence is that of Sex determination protein tasselseed-2 (TS2) from Zea mays (Maize).